Here is a 79-residue protein sequence, read N- to C-terminus: MAKVCQVTGKRPQSGNNVSHANKKTNRRFLPNLKKRRFWLPDEKRFITLTVSTHGMRIIDKLGINAVLKKIREREKESK.

Positions 1–26 (MAKVCQVTGKRPQSGNNVSHANKKTN) are disordered. Over residues 11 to 20 (RPQSGNNVSH) the composition is skewed to polar residues.

Belongs to the bacterial ribosomal protein bL28 family.

The polypeptide is Large ribosomal subunit protein bL28 (Coxiella burnetii (strain CbuK_Q154) (Coxiella burnetii (strain Q154))).